We begin with the raw amino-acid sequence, 793 residues long: Acetyl-CoA decarbonylase/synthase complex subunit alpha (793 aa).

Residues C55, C58, C63, and C73 each contribute to the [4Fe-4S] cluster site. CO is bound at residue H96. Positions 229, 257, and 309 each coordinate [Ni-4Fe-4S] cluster. 2 4Fe-4S ferredoxin-type domains span residues 393-422 (EQQF…ISEM) and 432-461 (EPFS…LKLY). Residues C403, C406, C409, C413, C441, C444, C447, and C451 each contribute to the [4Fe-4S] cluster site. 3 residues coordinate [Ni-4Fe-4S] cluster: C509, C538, and C573.

The protein belongs to the Ni-containing carbon monoxide dehydrogenase family. In terms of assembly, heterotetramer of two alpha and two epsilon subunits. The ACDS complex is made up of alpha, epsilon, beta, gamma and delta subunits with a probable stoichiometry of (alpha(2)epsilon(2))(4)-beta(8)-(gamma(1)delta(1))(8). Requires [4Fe-4S] cluster as cofactor. [Ni-4Fe-4S] cluster serves as cofactor.

The catalysed reaction is CO + 2 oxidized [2Fe-2S]-[ferredoxin] + H2O = 2 reduced [2Fe-2S]-[ferredoxin] + CO2 + 2 H(+). Its function is as follows. Part of the ACDS complex that catalyzes the reversible cleavage of acetyl-CoA, allowing autotrophic growth from CO(2). The alpha-epsilon subcomponent functions as a carbon monoxide dehydrogenase. This chain is Acetyl-CoA decarbonylase/synthase complex subunit alpha, found in Methanothrix soehngenii (Methanosaeta concilii).